The following is a 353-amino-acid chain: L-tryptophan dehydrogenase (353 aa).

R44 is a binding site for NAD(+). K80 functions as the Proton donor/acceptor in the catalytic mechanism. Residues D114, T146, 176–181, K204, and 255–257 contribute to the NAD(+) site; these read GLGNVG and AAN.

Belongs to the Glu/Leu/Phe/Val dehydrogenases family. Homodimer.

The catalysed reaction is L-tryptophan + NAD(+) + H2O = indole-3-pyruvate + NH4(+) + NADH + H(+). Highly susceptible to inhibition by indole-3-pyruvate. Activity is not affected by the presence of metal ions, EDTA, KCl or DMSO. Functionally, catalyzes the reversible oxidative deamination of L-tryptophan to indole-3-pyruvate in the presence of NAD(+). Shows weak activity with L-phenylalanine, but cannot use other L-amino acids and D-Trp. Cannot use NADP(+) for oxidative deamination of L-Trp, and shows only weak activity with NADPH for reductive amination of indole-3-pyruvate. Involved in the biosynthesis of scytonemin, a cyanobacterial radiation-absorbing pigment. The protein is L-tryptophan dehydrogenase of Nostoc punctiforme.